The following is a 79-amino-acid chain: MYIDITIDLKHYNGSVFDLRLSDYHPVKKVIDIAWQAQSVSMPPREGHWIRVVNKDKVFSGECKLSDCGITNGDRLEIL.

Belongs to the EsaB family.

In terms of biological role, required for YukE secretion. Probable component or regulator of the ESX/ESAT-6-like secretion system (BsEss). This Bacillus subtilis (strain 168) protein is ESX secretion system protein YukD (yukD).